The following is an 875-amino-acid chain: MSKSTAEIRQAFLDFFHSKGHQVVASSSLVPNNDPTLLFTNAGMNQFKDVFLGLDKRNYSRATTSQRCVRAGGKHNDLENVGYTARHHTFFEMLGNFSFGDYFKHDAIQYAWELLTGENWFNLPKERLWVTVYETDDEAYEIWEKEVGIPRERIIRIGDNKGAPYASDNFWQMGDTGPCGPCTEIFYDHGDHIWGGPPGTAEEDGDRYIEIWNIVFMQFNRQIDGTMEPLPKPSVDTGMGLERIAAVLQHVNSNYDIDLFSTLIKSVAEVTGATDLSNKSLRVIADHIRSCAFLIADGVIPSNENRGYVLRRIIRRAVRHGNMLGAKDTFFYKLVGPLVGVMGDAGEELKRQQSQVEQVLKTEEEQFARTLERGLALLDEELSQLTGDTLDGETAFRLYDTYGFPVDLTADVCRERNIKVDEAGFEAAMEEQRRRARESSGFGADYNAMIRVDSASEFQGYDRLELNAKVTALFVDGKAVDSISAGQDAVVVLDKTPFYAESGGQVGDKGELKGNGFSFAVSDTQKYGQAIGHIGKLASGSLKVGEGVQAEVDEARRERIRLNHSATHLMHAALRDVLGTHVAQKGSLVNDKILRFDFSHFEAMKPSEIRAVEDMVNAQIRRNLPIETNIMDLEAARAKGAMALFGEKYDERVRVLSMGDFSTELCGGTHASRTGDIGLFRILSESGTAAGVRRIEAVTGEGAIASLHAESDQLHDIAQLLKGDSHNLGEKVRSALERSRQLEKELQQLKEQAAVQESANLSSKAVDIKGVKLLVSELAGVEPKMLRTMVDDLKNQLGSTIIVLATAVDGKVSLIAGVSKDVTDRVKAGELIGMVAQQVGGKGGGRPDMAQAGGTDAAALPAALASVESWVSAKL.

Residues histidine 564, histidine 568, cysteine 666, and histidine 670 each contribute to the Zn(2+) site.

Belongs to the class-II aminoacyl-tRNA synthetase family. As to quaternary structure, homotetramer. The cofactor is Zn(2+).

It localises to the cytoplasm. It carries out the reaction tRNA(Ala) + L-alanine + ATP = L-alanyl-tRNA(Ala) + AMP + diphosphate. In terms of biological role, catalyzes the attachment of alanine to tRNA(Ala) in a two-step reaction: alanine is first activated by ATP to form Ala-AMP and then transferred to the acceptor end of tRNA(Ala). Also edits incorrectly charged Ser-tRNA(Ala) and Gly-tRNA(Ala) via its editing domain. This chain is Alanine--tRNA ligase, found in Enterobacter sp. (strain 638).